We begin with the raw amino-acid sequence, 885 residues long: DDT domain-containing protein DDB_G0282237 (885 aa).

One can recognise a WAC domain in the interval 20–125 (EEYFVIKFTK…GEIVSFKKAN (106 aa)). 3 disordered regions span residues 141-184 (ESDE…INAL), 201-264 (DDEN…SVRK), and 367-431 (LEDT…KENE). Over residues 154–180 (SSSSSSTTTTTTTPTTPPTTTTTTSSS) the composition is skewed to low complexity. Over residues 210 to 264 (KNNGDTSSDKKGEKEKEKEKEKEKEKEKEKEKEKEKEKEKEKEKEKDSDTKSVRK) the composition is skewed to basic and acidic residues. A coiled-coil region spans residues 217 to 260 (SDKKGEKEKEKEKEKEKEKEKEKEKEKEKEKEKEKEKEKDSDTK). Residues 367–379 (LEDTEEESVDIES) show a composition bias toward acidic residues. Over residues 380–396 (NDNSNSNGNSNSNNNLD) the composition is skewed to low complexity. One can recognise a DDT domain in the interval 443-503 (SNTFGDFLMV…MKTIFTLPSY (61 aa)). Residues 530–565 (FQNEVKRIAIEEKEKQEKLKQLEEQNIRMLNLANEL) are a coiled coil. 2 disordered regions span residues 562–632 (ANEL…WKEE) and 707–744 (KQDD…QKKP). Positions 567 to 577 (GSDDEDDEMKL) are enriched in acidic residues. Positions 578–603 (DEDGNEIKKDVEMKDNDGTKDTKKDD) are enriched in basic and acidic residues. Coiled coils occupy residues 593–628 (NDGT…GEEE) and 674–782 (ASEK…RDRN). Composition is skewed to acidic residues over residues 604-631 (EENE…EWKE) and 715-729 (AEDD…EEQQ).

It is found in the nucleus. The sequence is that of DDT domain-containing protein DDB_G0282237 from Dictyostelium discoideum (Social amoeba).